A 179-amino-acid polypeptide reads, in one-letter code: 5'-deoxynucleotidase VV1_0013 (179 aa).

Histidine 53 provides a ligand contact to a divalent metal cation. Substrate-binding positions include 62-65 and aspartate 122; that span reads DLPT. Aspartate 122 serves as a coordination point for a divalent metal cation.

It belongs to the 5DNU family. In terms of assembly, homodimer. A divalent metal cation is required as a cofactor.

It localises to the cytoplasm. The catalysed reaction is a 2'-deoxyribonucleoside 5'-phosphate + H2O = a 2'-deoxyribonucleoside + phosphate. In terms of biological role, catalyzes the strictly specific dephosphorylation of 2'-deoxyribonucleoside 5'-monophosphates. The protein is 5'-deoxynucleotidase VV1_0013 of Vibrio vulnificus (strain CMCP6).